The chain runs to 660 residues: Putative ABC transporter ATP-binding MG390 homolog (660 aa).

Residues 6–126 (QEQPNECGIC…KQWTGYAATV (121 aa)) enclose the Peptidase C39 domain. Cys12 is an active-site residue. 6 helical membrane passes run 150-170 (LIIFYVFIELIIIGISTLLAT), 188-208 (IVVFVVFFLVLKGLYLLLYAL), 265-285 (HIPNLIISCTVALIIGTLIGI), 290-310 (FLWIAIVQIVVNCAIFLYDFF), 379-399 (SFAQQVFDFLILALGIIGIIE), and 402-422 (YTLAFLFYIFSIQALFSAYAT). The ABC transporter domain occupies 464 to 660 (INLNNCSITL…INLSPYLQQT (197 aa)). Residue 494–501 (GENGSGKS) participates in ATP binding.

This sequence belongs to the ABC transporter superfamily.

The protein resides in the cell membrane. In Mycoplasma pneumoniae (strain ATCC 29342 / M129 / Subtype 1) (Mycoplasmoides pneumoniae), this protein is Putative ABC transporter ATP-binding MG390 homolog.